Here is a 450-residue protein sequence, read N- to C-terminus: F-box/FBD/LRR-repeat protein At5g22660 (450 aa).

The region spanning 12–58 (EDRISSLPDHLLSQILSNLPTENAVTTSILSTRWKDLWLSTPVLDID) is the F-box domain. LRR repeat units lie at residues 157-181 (LPNLKVMHLEENIYSYAETMEKFIS) and 294-317 (LSSLRDMTISGTTLKIICHYLKHE). The FBD domain occupies 364–416 (EEISLSSSVPKCLQSSLENVEIIRPNYGSGEEMKLSKYFLENSLVLKKFKLCR).

This is F-box/FBD/LRR-repeat protein At5g22660 from Arabidopsis thaliana (Mouse-ear cress).